The primary structure comprises 219 residues: Glutathione S-transferase 3 (219 aa).

Residues 3 to 82 (DEVVLLDTWA…YIDEVWNDKS (80 aa)) form the GST N-terminal domain. Residues Ser-13, Ile-54, and 66-67 (ES) contribute to the glutathione site. The region spanning 88–216 (DPYKRSQARF…GLIVELQKTL (129 aa)) is the GST C-terminal domain.

It belongs to the GST superfamily. HSP26 family. As to quaternary structure, homodimer. degradation; (R)-lactate from methylglyoxal: step 1/2.

The enzyme catalyses RX + glutathione = an S-substituted glutathione + a halide anion + H(+). In terms of biological role, conjugation of reduced glutathione to a wide number of exogenous and endogenous hydrophobic electrophiles. Involved in the detoxification of certain herbicides. The protein is Glutathione S-transferase 3 (GST3) of Glycine max (Soybean).